Consider the following 129-residue polypeptide: uncharacterized protein (129 aa).

Over residues 85–108 (SSAADSDDSSSCSECDSDALLSDD) the composition is skewed to low complexity. The segment at 85–110 (SSAADSDDSSSCSECDSDALLSDDGP) is disordered.

This is an uncharacterized protein from Microplitis demolitor (Parasitoid wasp).